Here is a 306-residue protein sequence, read N- to C-terminus: Pentalenolactone F synthase (306 aa).

Fe cation is bound by residues His110 and Asp112. The 2-oxoglutarate site is built by Thr138 and Trp258. Fe cation is bound at residue His273. Arg284 contributes to the 2-oxoglutarate binding site.

This sequence belongs to the TfdA dioxygenase family. Fe(2+) serves as cofactor.

It catalyses the reaction pentalenolactone D + 2 2-oxoglutarate + 2 O2 = pentalenolactone F + 2 succinate + 2 CO2 + H2O. It functions in the pathway antibiotic biosynthesis; neopentalenolactone biosynthesis. Its activity is regulated as follows. Activated by ascorbate. Catalyzes the Fe(2+) and alpha-ketoglutarate-dependent oxidation of pentalenolactone D to pentalenolactone F. Also able to catalyze the oxidation of pentalenolactone D to pentalenolactone E. In presence of neopentalenolactone D, mediates production of PL308 and possibly neopentalenolactone E. The chain is Pentalenolactone F synthase (ptlD) from Streptomyces avermitilis (strain ATCC 31267 / DSM 46492 / JCM 5070 / NBRC 14893 / NCIMB 12804 / NRRL 8165 / MA-4680).